Consider the following 508-residue polypeptide: Photosystem II CP47 reaction center protein (508 aa).

The next 6 membrane-spanning stretches (helical) occupy residues 21-36, 101-115, 140-156, 203-218, 237-252, and 457-472; these read SVHL…WAGS, IILS…IWHW, GIHL…FGAF, IAAG…FHLS, VLSS…AFVV, and TFAL…HGAR.

The protein belongs to the PsbB/PsbC family. PsbB subfamily. PSII is composed of 1 copy each of membrane proteins PsbA, PsbB, PsbC, PsbD, PsbE, PsbF, PsbH, PsbI, PsbJ, PsbK, PsbL, PsbM, PsbT, PsbX, PsbY, PsbZ, Psb30/Ycf12, at least 3 peripheral proteins of the oxygen-evolving complex and a large number of cofactors. It forms dimeric complexes. Binds multiple chlorophylls. PSII binds additional chlorophylls, carotenoids and specific lipids. is required as a cofactor.

It localises to the plastid. The protein localises to the chloroplast thylakoid membrane. One of the components of the core complex of photosystem II (PSII). It binds chlorophyll and helps catalyze the primary light-induced photochemical processes of PSII. PSII is a light-driven water:plastoquinone oxidoreductase, using light energy to abstract electrons from H(2)O, generating O(2) and a proton gradient subsequently used for ATP formation. The chain is Photosystem II CP47 reaction center protein from Adiantum capillus-veneris (Maidenhair fern).